Consider the following 425-residue polypeptide: tRNA(Ile)-lysidine synthase (425 aa).

27 to 32 lines the ATP pocket; the sequence is SGGLDS.

It belongs to the tRNA(Ile)-lysidine synthase family.

It localises to the cytoplasm. It catalyses the reaction cytidine(34) in tRNA(Ile2) + L-lysine + ATP = lysidine(34) in tRNA(Ile2) + AMP + diphosphate + H(+). Functionally, ligates lysine onto the cytidine present at position 34 of the AUA codon-specific tRNA(Ile) that contains the anticodon CAU, in an ATP-dependent manner. Cytidine is converted to lysidine, thus changing the amino acid specificity of the tRNA from methionine to isoleucine. The chain is tRNA(Ile)-lysidine synthase from Streptococcus sanguinis (strain SK36).